The primary structure comprises 399 residues: Phosphoglycerate kinase (399 aa).

Substrate is bound by residues 22–24 (DLN), arginine 37, 60–63 (HFGR), arginine 119, and arginine 152. ATP-binding positions include lysine 202, glutamate 324, and 354 to 357 (GGDT).

This sequence belongs to the phosphoglycerate kinase family. As to quaternary structure, monomer.

The protein resides in the cytoplasm. It catalyses the reaction (2R)-3-phosphoglycerate + ATP = (2R)-3-phospho-glyceroyl phosphate + ADP. The protein operates within carbohydrate degradation; glycolysis; pyruvate from D-glyceraldehyde 3-phosphate: step 2/5. The polypeptide is Phosphoglycerate kinase (Sinorhizobium medicae (strain WSM419) (Ensifer medicae)).